We begin with the raw amino-acid sequence, 215 residues long: Probable nicotinate-nucleotide adenylyltransferase (215 aa).

The protein belongs to the NadD family.

It catalyses the reaction nicotinate beta-D-ribonucleotide + ATP + H(+) = deamido-NAD(+) + diphosphate. Its pathway is cofactor biosynthesis; NAD(+) biosynthesis; deamido-NAD(+) from nicotinate D-ribonucleotide: step 1/1. In terms of biological role, catalyzes the reversible adenylation of nicotinate mononucleotide (NaMN) to nicotinic acid adenine dinucleotide (NaAD). In Gluconacetobacter diazotrophicus (strain ATCC 49037 / DSM 5601 / CCUG 37298 / CIP 103539 / LMG 7603 / PAl5), this protein is Probable nicotinate-nucleotide adenylyltransferase.